A 620-amino-acid chain; its full sequence is 1-deoxy-D-xylulose-5-phosphate synthase (620 aa).

Residues His80 and 121–123 contribute to the thiamine diphosphate site; that span reads GHS. Position 152 (Asp152) interacts with Mg(2+). Thiamine diphosphate is bound by residues 153-154, Asn181, Tyr288, and Glu370; that span reads GA. Asn181 is a Mg(2+) binding site.

This sequence belongs to the transketolase family. DXPS subfamily. Homodimer. Requires Mg(2+) as cofactor. Thiamine diphosphate serves as cofactor.

The enzyme catalyses D-glyceraldehyde 3-phosphate + pyruvate + H(+) = 1-deoxy-D-xylulose 5-phosphate + CO2. It participates in metabolic intermediate biosynthesis; 1-deoxy-D-xylulose 5-phosphate biosynthesis; 1-deoxy-D-xylulose 5-phosphate from D-glyceraldehyde 3-phosphate and pyruvate: step 1/1. Catalyzes the acyloin condensation reaction between C atoms 2 and 3 of pyruvate and glyceraldehyde 3-phosphate to yield 1-deoxy-D-xylulose-5-phosphate (DXP). This Shigella dysenteriae serotype 1 (strain Sd197) protein is 1-deoxy-D-xylulose-5-phosphate synthase.